Reading from the N-terminus, the 344-residue chain is Phosphate acyltransferase (344 aa).

The protein belongs to the PlsX family. In terms of assembly, homodimer. Probably interacts with PlsY.

Its subcellular location is the cytoplasm. The enzyme catalyses a fatty acyl-[ACP] + phosphate = an acyl phosphate + holo-[ACP]. It participates in lipid metabolism; phospholipid metabolism. Its function is as follows. Catalyzes the reversible formation of acyl-phosphate (acyl-PO(4)) from acyl-[acyl-carrier-protein] (acyl-ACP). This enzyme utilizes acyl-ACP as fatty acyl donor, but not acyl-CoA. The chain is Phosphate acyltransferase from Enterobacter sp. (strain 638).